The chain runs to 649 residues: tRNA-guanine(15) transglycosylase (649 aa).

The active-site Nucleophile is Asp-88. Positions 123 and 194 each coordinate substrate. Cys-280, Cys-282, and Cys-285 together coordinate Zn(2+). One can recognise a PUA domain in the interval 573–648 (KYRIVIDSSV…VAATLRGGLK (76 aa)).

It belongs to the archaeosine tRNA-ribosyltransferase family. Zn(2+) serves as cofactor.

It catalyses the reaction guanosine(15) in tRNA + 7-cyano-7-deazaguanine = 7-cyano-7-carbaguanosine(15) in tRNA + guanine. It functions in the pathway tRNA modification; archaeosine-tRNA biosynthesis. Functionally, exchanges the guanine residue with 7-cyano-7-deazaguanine (preQ0) at position 15 in the dihydrouridine loop (D-loop) of archaeal tRNAs. In Methanococcus maripaludis (strain DSM 14266 / JCM 13030 / NBRC 101832 / S2 / LL), this protein is tRNA-guanine(15) transglycosylase.